The following is a 531-amino-acid chain: Developmental and secondary metabolism regulator VE1 (531 aa).

The Velvet domain occupies 26–220; it reads NRSLWYQMTV…ADQGCPVRIR (195 aa). The Nuclear localization signal motif lies at 40-45; it reads ERARAC. Disordered stretches follow at residues 206 to 435 and 447 to 517; these read LSKT…SQTS and PVSP…SRAD. A compositionally biased stretch (basic and acidic residues) spans 244 to 253; it reads FERREEDFGR. Over residues 295–306 the composition is skewed to pro residues; it reads YPPPPPPPPSYE. Positions 348 to 357 are enriched in polar residues; it reads YAPTSQSPYS. A compositionally biased stretch (basic and acidic residues) spans 381 to 390; sequence LKHELYDRRQ. Residues 391 to 405 show a composition bias toward low complexity; sequence STSTYVPPSPSVYST. Residues 416–427 are compositionally biased toward pro residues; it reads SYPPTPVAAPRP. The interval 430 to 461 is PEST; it reads MHSQTSLPALKIDQLVSPVSPLPPIEPQTGPA. The span at 479 to 491 shows a compositional bias: polar residues; sequence FAQSTRPLHNGQR.

The protein belongs to the velvet family. VeA subfamily. Component of the heterotrimeric velvet complex composed of LAE1, VE1 and VELB; VE1 acting as a bridging protein between LAE1 and VELB. Interacts with VELB and VELC.

It localises to the nucleus. Its subcellular location is the cytoplasm. Component of the velvet transcription factor complex that controls sexual/asexual developmental ratio in response to light, promoting sexual development in the darkness while stimulating asexual sporulation under illumination. The velvet complex hat acts as a global regulator for secondary metabolite gene expression. Controls the expression of the cycotoxins fumonisins and fusarins gene cluster. Involved in cell wall integrity, cell surface hydrophobicity, hyphal polarity and conidiation pattern. Required for pathogenicity against maize seedlings. Involved in oxidative stress resistance by positively regulating the transcription of the catalase-encoding gene CAT2. The protein is Developmental and secondary metabolism regulator VE1 of Gibberella moniliformis (strain M3125 / FGSC 7600) (Maize ear and stalk rot fungus).